The chain runs to 378 residues: Putative F-box/kelch-repeat protein At3g43710 (378 aa).

The 47-residue stretch at 23 to 69 folds into the F-box domain; the sequence is TFGIEMLPDDLVLSCLARVPRMYYPILSLVSKRFRSFLTSTELYQTR. 3 Kelch repeats span residues 130–176, 178–227, and 262–308; these read NIYV…VLDG, IYVA…GYDG, and SQCV…VPTK.

This chain is Putative F-box/kelch-repeat protein At3g43710, found in Arabidopsis thaliana (Mouse-ear cress).